A 212-amino-acid polypeptide reads, in one-letter code: Eukaryotic translation initiation factor 4E-1 (212 aa).

The cysteines at positions 125 and 129 are disulfide-linked.

This sequence belongs to the eukaryotic initiation factor 4E family. EIF4F is a multi-subunit complex, the composition of which varies with external and internal environmental conditions. It is composed of at least EIF4A, EIF4E and EIF4G. EIF4E is also known to interact with other partners, including pgl-1. Interacts with ifet-1. In terms of tissue distribution, enriched in the germline from L3 larvae to adults; regions of the gonad undergoing spermatogenesis. Expressed in germ granules (P granules); when associated with pgl-1.

It localises to the cytoplasm. Functionally, recognizes and binds the 7-methylguanosine-containing mRNA cap during an early step in the initiation of protein synthesis and facilitates ribosome binding by inducing the unwinding of the mRNAs secondary structures. All 5 eIF4E proteins bind monomethyl cap structures. Only ife-1, ife-2 and ife-5 bind trimethyl cap structures which result from trans-splicing. Translation of trimethyl cap structure mRNAs may be regulated by intracellular redox state; disulfide bonds change the width and depth of the cap-binding cavity determining selectivity to mRNA caps. Required for progression through meiotic divisions during spermatogenesis and for the production of viable sperm. It is not required during oogenesis. In Caenorhabditis elegans, this protein is Eukaryotic translation initiation factor 4E-1 (ife-1).